The following is a 366-amino-acid chain: Chorismate synthase (366 aa).

NADP(+) contacts are provided by Arg48 and Arg54. FMN contacts are provided by residues 125-127 (RSS), 238-239 (NA), Gly278, 293-297 (KPTSS), and Arg319.

This sequence belongs to the chorismate synthase family. As to quaternary structure, homotetramer. FMNH2 serves as cofactor.

It carries out the reaction 5-O-(1-carboxyvinyl)-3-phosphoshikimate = chorismate + phosphate. It functions in the pathway metabolic intermediate biosynthesis; chorismate biosynthesis; chorismate from D-erythrose 4-phosphate and phosphoenolpyruvate: step 7/7. Catalyzes the anti-1,4-elimination of the C-3 phosphate and the C-6 proR hydrogen from 5-enolpyruvylshikimate-3-phosphate (EPSP) to yield chorismate, which is the branch point compound that serves as the starting substrate for the three terminal pathways of aromatic amino acid biosynthesis. This reaction introduces a second double bond into the aromatic ring system. The chain is Chorismate synthase from Paraburkholderia xenovorans (strain LB400).